A 288-amino-acid polypeptide reads, in one-letter code: Store-operated calcium entry regulator STIMATE (288 aa).

At 1-28 the chain is on the cytoplasmic side; the sequence is MQGPGGNVSRGLPGGPASTVASGAGRCE. 3 helical membrane-spanning segments follow: residues 29-49, 69-89, and 102-122; these read SGAL…VVAF, IWFL…FANV, and LYLI…YVGV. Residues 149 to 153 carry the GXXXG motif motif; that stretch reads GAWVG. 2 helical membrane passes run 156-176 and 194-214; these read ALYI…LLIL and LAIV…WVVD. The Cytoplasmic portion of the chain corresponds to 215 to 288; the sequence is NFLMRKGKTK…KKKHRFGLPV (74 aa). Positions 228–288 are disordered; that stretch reads EERGANQDSR…KKKHRFGLPV (61 aa). Positions 241-246 are required for localization in the endoplasmic reticulum; the sequence is KVRYRR. The segment covering 261–272 has biased composition (acidic residues); the sequence is ADDEMEESDAEE. Residues 277–288 are compositionally biased toward basic residues; the sequence is PVKKKHRFGLPV.

It belongs to the STIMATE family. In terms of assembly, homooligomer. Interacts with STIM1.

Its subcellular location is the endoplasmic reticulum membrane. Its function is as follows. Acts as a regulator of store-operated Ca(2+) entry (SOCE) at junctional sites that connect the endoplasmic reticulum (ER) and plasma membrane (PM), called ER-plasma membrane (ER-PM) junction or cortical ER. SOCE is a Ca(2+) influx following depletion of intracellular Ca(2+) stores. Acts by interacting with STIM1, promoting STIM1 conformational switch. Involved in STIM1 relocalization to ER-PM junctions. Contributes to the maintenance and reorganization of store-dependent ER-PM junctions. The polypeptide is Store-operated calcium entry regulator STIMATE (Rattus norvegicus (Rat)).